Here is a 492-residue protein sequence, read N- to C-terminus: Probable Xaa-Pro aminopeptidase AO090005001240 (492 aa).

The Mn(2+) site is built by D272, D283, E420, and E459.

It belongs to the peptidase M24B family. It depends on Mn(2+) as a cofactor.

The catalysed reaction is Release of any N-terminal amino acid, including proline, that is linked to proline, even from a dipeptide or tripeptide.. Its function is as follows. Catalyzes the removal of a penultimate prolyl residue from the N-termini of peptides. The chain is Probable Xaa-Pro aminopeptidase AO090005001240 from Aspergillus oryzae (strain ATCC 42149 / RIB 40) (Yellow koji mold).